The chain runs to 219 residues: Response regulator ArlR (219 aa).

The region spanning asparagine 3–leucine 116 is the Response regulatory domain. Aspartate 52 is modified (4-aspartylphosphate). Residues lysine 122–arginine 219 constitute a DNA-binding region (ompR/PhoB-type).

In terms of processing, phosphorylated by ArlS.

It is found in the cytoplasm. Its function is as follows. Member of the two-component regulatory system ArlS/ArlR. The protein is Response regulator ArlR (arlR) of Staphylococcus haemolyticus (strain JCSC1435).